Here is a 161-residue protein sequence, read N- to C-terminus: Regulator of ribonuclease activity A (161 aa).

It belongs to the RraA family. As to quaternary structure, homotrimer. Binds to both RNA-binding sites in the C-terminal region of Rne and to RhlB.

Its subcellular location is the cytoplasm. Its function is as follows. Globally modulates RNA abundance by binding to RNase E (Rne) and regulating its endonucleolytic activity. Can modulate Rne action in a substrate-dependent manner by altering the composition of the degradosome. Modulates RNA-binding and helicase activities of the degradosome. This Shewanella oneidensis (strain ATCC 700550 / JCM 31522 / CIP 106686 / LMG 19005 / NCIMB 14063 / MR-1) protein is Regulator of ribonuclease activity A.